Consider the following 20-residue polypeptide: VAGKSFVPIALGRQSKQTPF.

Its subcellular location is the secreted. The protein localises to the cell wall. This is 44 kDa cell wall protein 2 from Solanum lycopersicum (Tomato).